The primary structure comprises 430 residues: Methylthioribose kinase 1 (430 aa).

ATP is bound by residues D52–N56, K71, and R125–I127. N56 contacts substrate. Substrate is bound at residue D246. D263–E265 contacts ATP. R373 lines the substrate pocket.

The protein belongs to the methylthioribose kinase family. In terms of assembly, homodimer.

The enzyme catalyses 5-(methylsulfanyl)-D-ribose + ATP = 5-(methylsulfanyl)-alpha-D-ribose 1-phosphate + ADP + H(+). Its pathway is amino-acid biosynthesis; L-methionine biosynthesis via salvage pathway; S-methyl-5-thio-alpha-D-ribose 1-phosphate from S-methyl-5'-thioadenosine (hydrolase route): step 2/2. Catalyzes the phosphorylation of methylthioribose into methylthioribose-1-phosphate. This chain is Methylthioribose kinase 1, found in Oryza sativa subsp. japonica (Rice).